Reading from the N-terminus, the 307-residue chain is 4-diphosphocytidyl-2-C-methyl-D-erythritol kinase (307 aa).

Residue lysine 16 is part of the active site. 101–111 (PVAGGMAGGSA) serves as a coordination point for ATP. Aspartate 143 is a catalytic residue.

The protein belongs to the GHMP kinase family. IspE subfamily.

The enzyme catalyses 4-CDP-2-C-methyl-D-erythritol + ATP = 4-CDP-2-C-methyl-D-erythritol 2-phosphate + ADP + H(+). The protein operates within isoprenoid biosynthesis; isopentenyl diphosphate biosynthesis via DXP pathway; isopentenyl diphosphate from 1-deoxy-D-xylulose 5-phosphate: step 3/6. Its function is as follows. Catalyzes the phosphorylation of the position 2 hydroxy group of 4-diphosphocytidyl-2C-methyl-D-erythritol. This is 4-diphosphocytidyl-2-C-methyl-D-erythritol kinase from Nocardia farcinica (strain IFM 10152).